Here is a 395-residue protein sequence, read N- to C-terminus: Elongation factor Tu (395 aa).

The 196-residue stretch at 10 to 205 (KPHVNIGTIG…AVDSYIPMPE (196 aa)) folds into the tr-type G domain. Residues 19 to 26 (GHIDHGKT) form a G1 region. GTP is bound at residue 19–26 (GHIDHGKT). Thr-26 is a binding site for Mg(2+). The interval 61 to 65 (GITIA) is G2. Positions 82–85 (DCPG) are G3. Residues 82–86 (DCPGH) and 137–140 (NKVD) contribute to the GTP site. Residues 137 to 140 (NKVD) form a G4 region. The interval 175-177 (SAL) is G5.

The protein belongs to the TRAFAC class translation factor GTPase superfamily. Classic translation factor GTPase family. EF-Tu/EF-1A subfamily. Monomer.

The protein resides in the cytoplasm. The catalysed reaction is GTP + H2O = GDP + phosphate + H(+). Functionally, GTP hydrolase that promotes the GTP-dependent binding of aminoacyl-tRNA to the A-site of ribosomes during protein biosynthesis. This chain is Elongation factor Tu, found in Solibacter usitatus (strain Ellin6076).